The sequence spans 434 residues: uncharacterized protein (434 aa).

The TRAM domain occupies 4–62; it reads LLTIHTQVEGEITALAFGGAGILRYHGFVIFVPFTAPGDQIICRIIEIKKSFAVAELVK. [4Fe-4S] cluster is bound by residues Cys75, Cys81, Cys84, and Cys161. Residues Gln266, Tyr295, Glu316, and Asn364 each coordinate S-adenosyl-L-methionine. The active-site Nucleophile is the Cys391.

It belongs to the class I-like SAM-binding methyltransferase superfamily. RNA M5U methyltransferase family.

This is an uncharacterized protein from Protochlamydia amoebophila (strain UWE25).